The primary structure comprises 235 residues: Lipoprotein-releasing system ATP-binding protein LolD 1 (235 aa).

The ABC transporter domain occupies Phe5 to Leu234. Residue Gly42 to Thr49 coordinates ATP.

The protein belongs to the ABC transporter superfamily. Lipoprotein translocase (TC 3.A.1.125) family. The complex is composed of two ATP-binding proteins (LolD) and two transmembrane proteins (LolC and LolE).

It localises to the cell inner membrane. Functionally, part of the ABC transporter complex LolCDE involved in the translocation of mature outer membrane-directed lipoproteins, from the inner membrane to the periplasmic chaperone, LolA. Responsible for the formation of the LolA-lipoprotein complex in an ATP-dependent manner. The sequence is that of Lipoprotein-releasing system ATP-binding protein LolD 1 from Chlorobium luteolum (strain DSM 273 / BCRC 81028 / 2530) (Pelodictyon luteolum).